The chain runs to 835 residues: Translation initiation factor IF-2 (835 aa).

Residues 1-243 form a disordered region; the sequence is MSDTDGKKTL…RARQKAMGGA (243 aa). Positions 43 to 67 are enriched in low complexity; sequence VPKPGAGKPSAGGSSPAGDPSRRPA. Basic and acidic residues-rich tracts occupy residues 85 to 147, 157 to 166, and 175 to 205; these read KARE…EAKR, EAPKAERSAE, and EGGDNARRTTDRDREREQRQTRGKGRQDGRR. The 169-residue stretch at 332 to 500 folds into the tr-type G domain; the sequence is PRPPVITIMG…AIALQAEILE (169 aa). The G1 stretch occupies residues 341–348; the sequence is GHVDHGKT. 341–348 is a binding site for GTP; sequence GHVDHGKT. The segment at 366-370 is G2; the sequence is GITQH. The G3 stretch occupies residues 388-391; the sequence is DTPG. Residues 388–392 and 442–445 each bind GTP; these read DTPGH and NKID. Positions 442-445 are G4; it reads NKID. The tract at residues 478 to 480 is G5; the sequence is SAK.

The protein belongs to the TRAFAC class translation factor GTPase superfamily. Classic translation factor GTPase family. IF-2 subfamily.

Its subcellular location is the cytoplasm. Functionally, one of the essential components for the initiation of protein synthesis. Protects formylmethionyl-tRNA from spontaneous hydrolysis and promotes its binding to the 30S ribosomal subunits. Also involved in the hydrolysis of GTP during the formation of the 70S ribosomal complex. The sequence is that of Translation initiation factor IF-2 from Ruegeria pomeroyi (strain ATCC 700808 / DSM 15171 / DSS-3) (Silicibacter pomeroyi).